The primary structure comprises 392 residues: Formate-dependent phosphoribosylglycinamide formyltransferase (392 aa).

N(1)-(5-phospho-beta-D-ribosyl)glycinamide contacts are provided by residues 22–23 and Glu82; that span reads EL. ATP is bound by residues Arg114, Lys155, 160 to 165, 195 to 198, and Glu203; these read SSGKGQ and EGVV. The ATP-grasp domain occupies 119-308; the sequence is RLAAEELQLP…EFALHVRAFL (190 aa). Mg(2+) contacts are provided by Glu267 and Glu279. N(1)-(5-phospho-beta-D-ribosyl)glycinamide contacts are provided by residues Asp286, Lys355, and 362-363; that span reads RR.

Belongs to the PurK/PurT family. Homodimer.

It catalyses the reaction N(1)-(5-phospho-beta-D-ribosyl)glycinamide + formate + ATP = N(2)-formyl-N(1)-(5-phospho-beta-D-ribosyl)glycinamide + ADP + phosphate + H(+). It participates in purine metabolism; IMP biosynthesis via de novo pathway; N(2)-formyl-N(1)-(5-phospho-D-ribosyl)glycinamide from N(1)-(5-phospho-D-ribosyl)glycinamide (formate route): step 1/1. In terms of biological role, involved in the de novo purine biosynthesis. Catalyzes the transfer of formate to 5-phospho-ribosyl-glycinamide (GAR), producing 5-phospho-ribosyl-N-formylglycinamide (FGAR). Formate is provided by PurU via hydrolysis of 10-formyl-tetrahydrofolate. The sequence is that of Formate-dependent phosphoribosylglycinamide formyltransferase from Escherichia coli O1:K1 / APEC.